The following is a 601-amino-acid chain: Glutamine--fructose-6-phosphate aminotransferase [isomerizing] (601 aa).

Catalysis depends on cysteine 2, which acts as the Nucleophile; for GATase activity. The Glutamine amidotransferase type-2 domain maps to 2-214 (CGITGYIGTD…NGDIAHLTET (213 aa)). 2 SIS domains span residues 281 to 420 (STET…ARNA) and 453 to 591 (IGRE…IDKP). Lysine 596 (for Fru-6P isomerization activity) is an active-site residue.

Homodimer.

It is found in the cytoplasm. The enzyme catalyses D-fructose 6-phosphate + L-glutamine = D-glucosamine 6-phosphate + L-glutamate. Its function is as follows. Catalyzes the first step in hexosamine metabolism, converting fructose-6P into glucosamine-6P using glutamine as a nitrogen source. This Halobacterium salinarum (strain ATCC 700922 / JCM 11081 / NRC-1) (Halobacterium halobium) protein is Glutamine--fructose-6-phosphate aminotransferase [isomerizing].